Consider the following 320-residue polypeptide: Protein PR73 (320 aa).

The Cytoplasmic portion of the chain corresponds to 1–44 (MPRLQQKWLNSRECPTLRGEAAKGLFPTKDDPSAHKRMSPSDKD). A helical membrane pass occupies residues 45–65 (ILILCCKLGIALLCLGLLGEV). The Extracellular portion of the chain corresponds to 66-319 (AVRARRALTL…SAKTYGMSYY (254 aa)). N-linked (GlcNAc...) asparagine; by host glycans are attached at residues Asn-79, Asn-89, Asn-93, Asn-131, and Asn-146.

This sequence belongs to the mouse mammary tumor virus PR73 superantigen family.

The protein resides in the membrane. Superantigen. The polypeptide is Protein PR73 (Mouse mammary tumor virus (strain BR6) (MMTV)).